The following is a 56-amino-acid chain: Prokaryotic ubiquitin-like protein UBact (56 aa).

Residues 1–28 (MPQDQQRKKQFDPNPNRDDSQRKTPVDK) are compositionally biased toward basic and acidic residues. The tract at residues 1-33 (MPQDQQRKKQFDPNPNRDDSQRKTPVDKEIDDI) is disordered. Glutamine 56 bears the Deamidated glutamine mark. Residue glutamine 56 forms an Isoglutamyl lysine isopeptide (Gln-Lys) (interchain with K-? in acceptor proteins) linkage.

Belongs to the ubiquitin-like protein UBact family. May be modified by deamidation of its C-terminal glutamine to glutamate by the adjacently encoded deamidase. This could be a prerequisite to the subsequent conjugation, as shown in the other prokaryotic ubiquitin-like protein Pup.

May function as a protein modifier covalently attached to lysine residues of substrate proteins. This may serve to target the modified proteins for degradation by proteasomes. The polypeptide is Prokaryotic ubiquitin-like protein UBact (Yanofskybacteria sp. (strain GW2011_GWA1_39_13)).